Consider the following 130-residue polypeptide: Modulator protein MzrA (130 aa).

Over 1–15 (MIAAFIKRHAPQRRL) the chain is Cytoplasmic. Residues 16-36 (SLWLALPVVALLALVMMPALF) traverse the membrane as a helical segment. The Periplasmic portion of the chain corresponds to 37–130 (RHDSALQIRA…RISFKPQSIG (94 aa)).

It belongs to the MzrA family. Interacts with EnvZ.

The protein localises to the cell inner membrane. Functionally, modulates the activity of the EnvZ/OmpR two-component regulatory system, probably by directly modulating EnvZ enzymatic activity and increasing stability of phosphorylated OmpR. This chain is Modulator protein MzrA, found in Erwinia tasmaniensis (strain DSM 17950 / CFBP 7177 / CIP 109463 / NCPPB 4357 / Et1/99).